The following is a 605-amino-acid chain: Ankyrin repeat domain-containing protein 13D (605 aa).

ANK repeat units lie at residues 39–68 (RGRT…NVGK) and 72–101 (QGWA…YQRA). The disordered stretch occupies residues 306 to 333 (AQQHSSHTGAPVQQAASPTNPTAISPEE). Residues 319 to 328 (QAASPTNPTA) show a composition bias toward polar residues. UIM domains follow at residues 482–501 (EDDD…AGTE) and 528–547 (EEQL…STEP). Residues 541 to 605 (LQLSTEPRGP…RILQLSLTEH (65 aa)) form a disordered region. A compositionally biased stretch (pro residues) spans 550-563 (PGSPPRTPPAPGPP). S552 carries the post-translational modification Phosphoserine. T556 is modified (phosphothreonine). Residues 564-575 (SFEEQLRLALEL) show a composition bias toward low complexity. 2 UIM domains span residues 564 to 583 (SFEE…QEER) and 589 to 605 (QEEE…LTEH). Over residues 576-589 (SSREQEERERRGQQ) the composition is skewed to basic and acidic residues.

In terms of assembly, interacts with EGFR (ubiquitinated); the interaction is direct and may regulate EGFR internalization.

It localises to the cell membrane. The protein resides in the late endosome. Functionally, ubiquitin-binding protein that specifically recognizes and binds 'Lys-63'-linked ubiquitin. Does not bind 'Lys-48'-linked ubiquitin. Positively regulates the internalization of ligand-activated EGFR by binding to the Ub moiety of ubiquitinated EGFR at the cell membrane. The chain is Ankyrin repeat domain-containing protein 13D (ANKRD13D) from Homo sapiens (Human).